We begin with the raw amino-acid sequence, 225 residues long: MGEYYKNKLLLRPSVYSDNIQKIKLVAYEYGKLHAKYPLSVIGIMKTIDDKFVLCHRYNSFLFSEIAFTKDKRRKIRLFKKYSKYMSNIERDILSYKLSLPNNYNTNHIDIIFPGGKIKDLESITNCLVREIKEELNIDSSYLAICKNCFVYGSIYDRLIDKDFEVIALYVETDLTSRQILNRFIPNREIKGISFIDARDINKDYLYTNVIKYIINAVRTSASNS.

The Nudix hydrolase domain occupies 35–218; that stretch reads AKYPLSVIGI…NVIKYIINAV (184 aa). The Nudix box signature appears at 116-137; that stretch reads GKIKDLESITNCLVREIKEELN. Glu122 serves as a coordination point for Mg(2+). Glu131 functions as the Nucleophile in the catalytic mechanism. Glu135 serves as a coordination point for Mn(2+). Position 157 (Asp157) interacts with Mg(2+).

It belongs to the Nudix hydrolase family. Requires Mg(2+) as cofactor. It depends on Mn(2+) as a cofactor.

Functionally, decapping enzyme required for the removal of the 5'-end m7GpppN cap tethered to viral and host mRNAs to allow their decay in cells. May therefore accelerate viral and cellular mRNA turnover to eliminate competing host mRNAs and allow stage-specific synthesis of viral proteins. Acceleration of the turnover of cellular transcripts may even promote the shutoff of host protein synthesis. The sequence is that of mRNA-decapping protein D10 from Fowlpox virus (strain NVSL) (FPV).